A 1016-amino-acid chain; its full sequence is DNA polymerase I (1016 aa).

One can recognise a 5'-3' exonuclease domain in the interval 1–308 (MPNSIWTSSD…MEFTTLTRRV (308 aa)). Residues 334 to 361 (GPDLDAAEPEPVAGGIPEVSGESVPMPP) are disordered. The 3'-5' exonuclease domain maps to 394 to 630 (SAYVTIRDLV…MEARGITVDR (237 aa)). A polymerase region spans residues 768 to 1016 (GRKIRTAFIS…RAATNWDEAH (249 aa)).

It belongs to the DNA polymerase type-A family. As to quaternary structure, single-chain monomer with multiple functions.

The enzyme catalyses DNA(n) + a 2'-deoxyribonucleoside 5'-triphosphate = DNA(n+1) + diphosphate. Functionally, in addition to polymerase activity, this DNA polymerase exhibits 3'-5' and 5'-3' exonuclease activity. This chain is DNA polymerase I (polA), found in Rhizobium leguminosarum.